Consider the following 572-residue polypeptide: Sulfite reductase [NADPH] hemoprotein beta-component (572 aa).

Residues C437, C443, C482, and C486 each contribute to the [4Fe-4S] cluster site. Position 486 (C486) interacts with siroheme.

Belongs to the nitrite and sulfite reductase 4Fe-4S domain family. In terms of assembly, alpha(8)-beta(8). The alpha component is a flavoprotein, the beta component is a hemoprotein. The cofactor is siroheme. [4Fe-4S] cluster is required as a cofactor.

It catalyses the reaction hydrogen sulfide + 3 NADP(+) + 3 H2O = sulfite + 3 NADPH + 4 H(+). It functions in the pathway sulfur metabolism; hydrogen sulfide biosynthesis; hydrogen sulfide from sulfite (NADPH route): step 1/1. Component of the sulfite reductase complex that catalyzes the 6-electron reduction of sulfite to sulfide. This is one of several activities required for the biosynthesis of L-cysteine from sulfate. The chain is Sulfite reductase [NADPH] hemoprotein beta-component from Lysinibacillus sphaericus (strain C3-41).